The chain runs to 98 residues: Venom toxin OcyC11 (98 aa).

Positions 1–20 (MKIACTLVLFVMLRCYVNAR) are cleaved as a signal peptide.

Contains 4 disulfide bonds. Expressed by the venom gland.

Its subcellular location is the secreted. This is Venom toxin OcyC11 from Opisthacanthus cayaporum (South American scorpion).